Here is a 1442-residue protein sequence, read N- to C-terminus: Cleavage and polyadenylation specificity factor subunit 1 (1442 aa).

The protein belongs to the CPSF1 family. Component of the CPSF complex, at least composed of CPSF160, CPSF100, CPSF73-I, CPSF73-II, CPSF30, FY and FIPS5. Forms a complex with cleavage and polyadenylation specificity factor (CPSF) subunits FY, CPSF30, CPSF73-I, CPSF 73-II and CPSF100.

Its subcellular location is the nucleus. In terms of biological role, CPSF plays a key role in pre-mRNA 3'-end formation, recognizing the AAUAAA signal sequence and interacting with poly(A)polymerase and other factors to bring about cleavage and poly(A) addition. This subunit is involved in the RNA recognition step of the polyadenylation reaction. This is Cleavage and polyadenylation specificity factor subunit 1 (CPSF160) from Arabidopsis thaliana (Mouse-ear cress).